Consider the following 807-residue polypeptide: Sucrose synthase 1 (807 aa).

The GT-B glycosyltransferase stretch occupies residues 272-748; the sequence is MMFNVVILSP…GLKRIYEKYT (477 aa).

Belongs to the glycosyltransferase 1 family. Plant sucrose synthase subfamily. As to quaternary structure, forms homotetramers. In endosperm it forms both homotetramers and heterotetramers with SS2, all three possible heterotetramers are formed. Highly expressed in developing endosperm and in roots and, at lower levels, in coleoptiles and aleurone. In 3 day old roots it is detected in cap cells and along the vascular strand, starting just after the meristemic region. In 9 day old leaves it is found in the phloem. In seeds it is distributed throughout the endosperm and also found in the assimilate-unloading tissues, the nucellar projection, the vascular area and at a high concentration in the chalazal region.

The catalysed reaction is an NDP-alpha-D-glucose + D-fructose = a ribonucleoside 5'-diphosphate + sucrose + H(+). Functionally, sucrose-cleaving enzyme that provides UDP-glucose and fructose for various metabolic pathways. The protein is Sucrose synthase 1 (SS1) of Hordeum vulgare (Barley).